The following is a 203-amino-acid chain: MSGRSVRAETRSRAKDDIKKVMAAIERVRRWEKKWVTVGDTSLRIFKWVPVVDTKEKEKSKVSVGGEMQRKNFPSEESSDNACSVLLDFQDENSNQSSLSDSYQHKAAADSSNNSSPPASEPVSPAPQSLDYRTDDPQPPTLGQEIMEEPLLQSSEIADEPPTLIKEDLLPLTAQEDEDSCGAPPLKRICTEQVSVIQMVPLS.

2 disordered regions span residues 55-80 and 94-148; these read KEKE…ESSD and SNQS…EIME. Over residues 109–129 the composition is skewed to low complexity; it reads ADSSNNSSPPASEPVSPAPQS.

The protein belongs to the BCL7 family.

The protein is B-cell CLL/lymphoma 7 protein family member B-A (bcl7ba) of Danio rerio (Zebrafish).